The primary structure comprises 888 residues: Pyruvate dehydrogenase E1 component (888 aa).

In terms of assembly, homodimer. Part of the PDH complex, consisting of multiple copies of pyruvate dehydrogenase (E1), dihydrolipoamide acetyltransferase (E2) and lipoamide dehydrogenase (E3). Thiamine diphosphate is required as a cofactor.

The catalysed reaction is N(6)-[(R)-lipoyl]-L-lysyl-[protein] + pyruvate + H(+) = N(6)-[(R)-S(8)-acetyldihydrolipoyl]-L-lysyl-[protein] + CO2. In terms of biological role, component of the pyruvate dehydrogenase (PDH) complex, that catalyzes the overall conversion of pyruvate to acetyl-CoA and CO(2). The protein is Pyruvate dehydrogenase E1 component (aceE) of Buchnera aphidicola subsp. Schizaphis graminum (strain Sg).